Reading from the N-terminus, the 392-residue chain is Cell division protein FtsZ (392 aa).

Residues 24–28, 111–113, Glu-142, Arg-145, and Asp-189 each bind GTP; these read GGGCN and GTG.

It belongs to the FtsZ family. Homodimer. Polymerizes to form a dynamic ring structure in a strictly GTP-dependent manner. Interacts directly with several other division proteins.

It localises to the cytoplasm. Essential cell division protein that forms a contractile ring structure (Z ring) at the future cell division site. The regulation of the ring assembly controls the timing and the location of cell division. One of the functions of the FtsZ ring is to recruit other cell division proteins to the septum to produce a new cell wall between the dividing cells. Binds GTP and shows GTPase activity. In Neisseria gonorrhoeae, this protein is Cell division protein FtsZ.